The sequence spans 22 residues: Cytin chain B (22 aa).

It belongs to the protease inhibitor I13 (potato type I serine protease inhibitor) family. As to quaternary structure, heterodimer of an A chain and a B chain, linked by a disulfide bond.

Its function is as follows. Inhibitor of chymotrypsin. This chain is Cytin chain B, found in Theromyzon tessulatum (Duck leech).